A 419-amino-acid polypeptide reads, in one-letter code: RING finger protein 150 (419 aa).

The first 34 residues, 1 to 34 (MALSVIQACRSLALSTWLLSFCFVHLLCLDFTVA), serve as a signal peptide directing secretion. At 35-197 (EKEEWYTAFV…NLQKYVSRTS (163 aa)) the chain is on the extracellular side. Residues 70 to 172 (SLKREARGVL…PKGRELVLLM (103 aa)) enclose the PA domain. A helical membrane pass occupies residues 198–218 (VVFVSISFIILMIISLAWLVF). Topologically, residues 219-419 (YYIQRFRYAN…IDTPTDDPKC (201 aa)) are cytoplasmic. The segment at 267–308 (CAVCIEGYKPNDVVRILPCRHLFHKCCVDPWLVDHRTCPMCK) adopts an RING-type; atypical zinc-finger fold. Residues 374–419 (SEPLSQDTMPTEQSELQPIASGSSDVSLTTGAGHSDIDTPTDDPKC) form a disordered region. The segment covering 376 to 405 (PLSQDTMPTEQSELQPIASGSSDVSLTTGA) has biased composition (polar residues).

It localises to the membrane. This is RING finger protein 150 (rnf150) from Danio rerio (Zebrafish).